The primary structure comprises 242 residues: Spiralin (242 aa).

An N-terminal signal peptide occupies residues 1 to 23; the sequence is MKKLLSILAVFGVSAVGTTSVVA. Cysteine 24 is lipidated: N-palmitoyl cysteine. A lipid anchor (S-diacylglycerol cysteine) is attached at cysteine 24.

It belongs to the spiralin family. In terms of assembly, seems to occur as dimer, tetramers, and large oligomers of identical chains. Post-translationally, palmitate and stearate are the major lipid components.

The protein resides in the cell membrane. In terms of biological role, major membrane protein of spiroplasma. This chain is Spiralin (spi), found in Spiroplasma melliferum.